Here is a 68-residue protein sequence, read N- to C-terminus: Cytotoxic linear peptide IsCT (68 aa).

An N-terminal signal peptide occupies residues 1–23 (MKTQFAILLVALVLFQMFAQSDA). Phe36 is subject to Phenylalanine amide. The propeptide occupies 40–68 (GLSDLDGLDELFDGEISKADRDFLRELMR).

Belongs to the non-disulfide-bridged peptide (NDBP) superfamily. Short antimicrobial peptide (group 4) family. In terms of processing, isCTf is an enzymatic proteolytic cleavage product of IsCT by the proteases present in the venom. As to expression, expressed by the venom gland.

It localises to the secreted. The protein resides in the target cell membrane. In terms of biological role, shows weak hemolytic activity and antibacterial activity against both Gram-positive and Gram-negative bacteria probably by forming pores in the cell membrane. IsCT adopts an amphipathic alpha-helical structure. Its function is as follows. Shows neither hemolytic, nor antibacterial activities, probably because it cannot adopt amphipathic alpha-helical structure. The polypeptide is Cytotoxic linear peptide IsCT (Opisthacanthus madagascariensis (Scorpion)).